Reading from the N-terminus, the 77-residue chain is uncharacterized protein (77 aa).

Residues 53 to 77 (KRVSSEANKEKSDITELLRKQVRPD) form a disordered region.

This is an uncharacterized protein from Escherichia coli (strain K12).